The chain runs to 299 residues: UBX domain-containing protein 1 (299 aa).

3 disordered regions span residues 39-61 (AGVPMETDAPAQAAPGAADSGAP), 127-176 (KAKL…NEDE), and 191-218 (EARKAKASGQPVPEAKPAPSAAPVAPPK). Low complexity predominate over residues 46–61 (DAPAQAAPGAADSGAP). Residues 111-179 (AKVLEIREKI…REKNEDEIAR (69 aa)) are a coiled coil. Basic and acidic residues predominate over residues 128–176 (AKLEAEENREKEKKRREDGKAMISHKEAARDREIREAAQDRRREKNEDE). The segment covering 201-213 (PVPEAKPAPSAAP) has biased composition (low complexity). The 78-residue stretch at 218–295 (KDYSTTTLQF…NLVPSANVIL (78 aa)) folds into the UBX domain.

In terms of assembly, interacts with cdc-48.1 (via N-terminus) and cdc-48.2 (via N-terminus) in vitro; the interaction with cdc-48.1 is not detected in vivo. Expressed in the germline (at protein level). Expressed in spermatocytes but not in mature sperm (at protein level). Ubiquitously expressed. Predominantly expressed in the spermatheca.

It is found in the cytoplasm. The protein resides in the perinuclear region. Functionally, ubiquitin-binding protein which acts as an adapter for ATPase cdc-48.1 and/or cdc-48.2, conferring substrate specificity. Together with ubxn-2 and ubxn-3, plays a role in hermaphrodite spermatogenesis probably by promoting the degradation of sex determination terminal factor tra-1. This chain is UBX domain-containing protein 1, found in Caenorhabditis elegans.